Here is a 322-residue protein sequence, read N- to C-terminus: Ribonuclease Z (322 aa).

Positions 62, 64, 66, 67, 139, 210, and 268 each coordinate Zn(2+). The Proton acceptor role is filled by Asp66.

The protein belongs to the RNase Z family. In terms of assembly, homodimer. It depends on Zn(2+) as a cofactor.

It carries out the reaction Endonucleolytic cleavage of RNA, removing extra 3' nucleotides from tRNA precursor, generating 3' termini of tRNAs. A 3'-hydroxy group is left at the tRNA terminus and a 5'-phosphoryl group is left at the trailer molecule.. Functionally, zinc phosphodiesterase, which displays some tRNA 3'-processing endonuclease activity. Probably involved in tRNA maturation, by removing a 3'-trailer from precursor tRNA. In Nostoc sp. (strain PCC 7120 / SAG 25.82 / UTEX 2576), this protein is Ribonuclease Z.